We begin with the raw amino-acid sequence, 125 residues long: MARIASVNIPDNKRLVVSLTYIYGLGPAMAAEICNKAKISKDKKVKELTDQELISLRNIIESEYKVEGDLRREVTLNIKKKKDIRCYQGLRHIRKLPVRGQNTHSNARTRKGKAIAIAGKKKAVK.

Belongs to the universal ribosomal protein uS13 family. Part of the 30S ribosomal subunit. Forms a loose heterodimer with protein S19. Forms two bridges to the 50S subunit in the 70S ribosome.

In terms of biological role, located at the top of the head of the 30S subunit, it contacts several helices of the 16S rRNA. In the 70S ribosome it contacts the 23S rRNA (bridge B1a) and protein L5 of the 50S subunit (bridge B1b), connecting the 2 subunits; these bridges are implicated in subunit movement. Contacts the tRNAs in the A and P-sites. The polypeptide is Small ribosomal subunit protein uS13 (Rickettsia felis (strain ATCC VR-1525 / URRWXCal2) (Rickettsia azadi)).